The following is a 128-amino-acid chain: SH2 domain-containing protein 1A (128 aa).

Positions 6–102 (VYHGKISRET…GIVIPLQYPV (97 aa)) constitute an SH2 domain. The interaction with FYN SH3 domain stretch occupies residues 67-92 (ETAPGVHKRYFRKIKNLISAFQKPDQ). K89 is subject to N6-acetyllysine. The interval 106–128 (SSARSTQGTTGIREDPDVCLKAP) is disordered. A compositionally biased stretch (basic and acidic residues) spans 117–128 (IREDPDVCLKAP).

Interacts with CD84, CD244, LY9, SLAMF1 and FYN. Interacts with NTRK1, NTRK2 and NTRK3.

The protein resides in the cytoplasm. Functionally, cytoplasmic adapter regulating receptors of the signaling lymphocytic activation molecule (SLAM) family such as SLAMF1, CD244, LY9, CD84, SLAMF6 and SLAMF7. In SLAM signaling seems to cooperate with SH2D1B/EAT-2. Initially it has been proposed that association with SLAMF1 prevents SLAMF1 binding to inhibitory effectors including INPP5D/SHIP1 and PTPN11/SHP-2. However, by simultaneous interactions, recruits FYN which subsequently phosphorylates and activates SLAMF1. Positively regulates CD244/2B4- and CD84-mediated natural killer (NK) cell functions. Can also promote CD48-, SLAMF6 -, LY9-, and SLAMF7-mediated NK cell activation. In the context of NK cell-mediated cytotoxicity enhances conjugate formation with target cells. May also regulate the activity of the neurotrophin receptors NTRK1, NTRK2 and NTRK3. In Macaca mulatta (Rhesus macaque), this protein is SH2 domain-containing protein 1A (SH2D1A).